The primary structure comprises 990 residues: Tyrosine-protein phosphatase 3 (990 aa).

Disordered stretches follow at residues Q47–V88, N100–E193, P246–Q414, and K431–L452. 2 stretches are compositionally biased toward low complexity: residues N52–V88 and N100–N117. Residues L127–K136 are compositionally biased toward polar residues. Low complexity-rich tracts occupy residues N137–N191, S250–L271, N278–N293, Q310–Q327, and N334–S413. The Tyrosine-protein phosphatase domain maps to M422–V715. Basic residues predominate over residues K437–Y447. Catalysis depends on C650, which acts as the Phosphocysteine intermediate. Positions P786–F795 are enriched in polar residues. Disordered stretches follow at residues P786–I814 and L834–F990. 2 stretches are compositionally biased toward low complexity: residues S796 to P806 and L834 to P850. Residues L851–S868 are compositionally biased toward polar residues. 2 stretches are compositionally biased toward low complexity: residues N878–G916 and G924–N968.

It belongs to the protein-tyrosine phosphatase family. Non-receptor class subfamily. In terms of tissue distribution, in the anterior-like and prestalk cell types.

The protein resides in the cytoplasm. It catalyses the reaction O-phospho-L-tyrosyl-[protein] + H2O = L-tyrosyl-[protein] + phosphate. Seems to dephosphorylate a protein of 130 kDa (p130). In Dictyostelium discoideum (Social amoeba), this protein is Tyrosine-protein phosphatase 3 (ptpC).